The chain runs to 193 residues: Ion-translocating oxidoreductase complex subunit A (193 aa).

6 consecutive transmembrane segments (helical) span residues 5–25, 39–59, 67–87, 102–122, 134–154, and 171–191; these read LLLL…FLGL, IGMG…AYLV, LGIE…VVQF, LLGI…VALL, IIYG…FASM, and SIAM…TGLV.

Belongs to the NqrDE/RnfAE family. The complex is composed of six subunits: RnfA, RnfB, RnfC, RnfD, RnfE and RnfG.

It localises to the cell inner membrane. Functionally, part of a membrane-bound complex that couples electron transfer with translocation of ions across the membrane. In Vibrio cholerae serotype O1 (strain ATCC 39315 / El Tor Inaba N16961), this protein is Ion-translocating oxidoreductase complex subunit A.